Consider the following 104-residue polypeptide: Protein enhancer of rudimentary (104 aa).

At Thr-18 the chain carries Phosphothreonine; by CK2. A Phosphoserine; by CK2 modification is found at Ser-24.

Belongs to the E(R) family.

Functionally, acts as an enhancer of the rudimentary gene. Has a role in pyrimidine biosynthesis and the cell cycle. The polypeptide is Protein enhancer of rudimentary (e(r)) (Drosophila virilis (Fruit fly)).